Consider the following 216-residue polypeptide: LexA repressor (216 aa).

Residues 28–48 (RAEIAAELGFSSANSAEEHLR) constitute a DNA-binding region (H-T-H motif). Residues serine 134 and lysine 171 each act as for autocatalytic cleavage activity in the active site.

This sequence belongs to the peptidase S24 family. Homodimer.

It carries out the reaction Hydrolysis of Ala-|-Gly bond in repressor LexA.. In terms of biological role, represses a number of genes involved in the response to DNA damage (SOS response), including recA and lexA. In the presence of single-stranded DNA, RecA interacts with LexA causing an autocatalytic cleavage which disrupts the DNA-binding part of LexA, leading to derepression of the SOS regulon and eventually DNA repair. This Paraburkholderia phytofirmans (strain DSM 17436 / LMG 22146 / PsJN) (Burkholderia phytofirmans) protein is LexA repressor.